Consider the following 285-residue polypeptide: MGDSELDYTIEFPEPSLQGWPWDPEREPVVILLGWGGCKDHYLAKYSAIYHNQGCTVIKYTAAWKAVFITESLGLNSLREDAKKLLELLFDYEIEKSPIVFHVFSNGGFMLYRYIVELLHSHCPLNKLHVVGTIFDSAPGNRNVIGSVRALDTILRTSTNKAFRFLALAAFAILVIILRILLYPLTRFLHENHYDAMKKDPSRWPQLYLYSRADPIISYLDVESMIAARRRRCLPTETLDFGKSEHVSHFRRFPQRYSEICTSFLRDCVRKASISMLRSEHPVSF.

Residues 165-185 traverse the membrane as a helical segment; that stretch reads FLALAAFAILVIILRILLYPL.

The protein belongs to the TMEM53 family.

Its subcellular location is the nucleus outer membrane. Functionally, ensures normal bone formation, through the negative regulation of bone morphogenetic protein (BMP) signaling in osteoblast lineage cells by blocking cytoplasm-nucleus translocation of phosphorylated SMAD proteins. The chain is Transmembrane protein 53-A (tmem53-a) from Xenopus laevis (African clawed frog).